The primary structure comprises 210 residues: ATP-dependent Clp protease proteolytic subunit (210 aa).

The Nucleophile role is filled by Ser106. The active site involves His131.

This sequence belongs to the peptidase S14 family. In terms of assembly, fourteen ClpP subunits assemble into 2 heptameric rings which stack back to back to give a disk-like structure with a central cavity, resembling the structure of eukaryotic proteasomes.

The protein resides in the cytoplasm. The enzyme catalyses Hydrolysis of proteins to small peptides in the presence of ATP and magnesium. alpha-casein is the usual test substrate. In the absence of ATP, only oligopeptides shorter than five residues are hydrolyzed (such as succinyl-Leu-Tyr-|-NHMec, and Leu-Tyr-Leu-|-Tyr-Trp, in which cleavage of the -Tyr-|-Leu- and -Tyr-|-Trp bonds also occurs).. Cleaves peptides in various proteins in a process that requires ATP hydrolysis. Has a chymotrypsin-like activity. Plays a major role in the degradation of misfolded proteins. In Afipia carboxidovorans (strain ATCC 49405 / DSM 1227 / KCTC 32145 / OM5) (Oligotropha carboxidovorans), this protein is ATP-dependent Clp protease proteolytic subunit.